A 291-amino-acid polypeptide reads, in one-letter code: tRNA pseudouridine synthase-like 1 (291 aa).

Residue D66 is the Nucleophile of the active site. Y130 serves as a coordination point for substrate.

It belongs to the tRNA pseudouridine synthase TruA family.

It carries out the reaction a uridine in tRNA = a pseudouridine in tRNA. The protein is tRNA pseudouridine synthase-like 1 (Pusl1) of Mus musculus (Mouse).